Consider the following 321-residue polypeptide: G-protein coupled receptor homolog ECRF3 (321 aa).

The Extracellular segment spans residues 1 to 34; sequence MEVKLDFSSEDFSNYSYNYSGDIYYGDVAPCVVN. N-linked (GlcNAc...) asparagine; by host glycans are attached at residues asparagine 14 and asparagine 18. The chain crosses the membrane as a helical span at residues 35-51; the sequence is FLISESALAFIYVLMFL. Topologically, residues 52 to 76 are cytoplasmic; it reads CNAIGNSLVLRTFLKYRAQAQSFDY. Residues 77-93 traverse the membrane as a helical segment; that stretch reads LMMGFCLNSLFLAGYLL. Topologically, residues 94-124 are extracellular; the sequence is MRLLRMFEIFMNTELCKLEAFFLNLSIYWSP. Asparagine 117 carries an N-linked (GlcNAc...) asparagine; by host glycan. A helical transmembrane segment spans residues 125–141; it reads FILVFISVLRCLLIFCA. At 142–149 the chain is on the cytoplasmic side; sequence TRLWVKKT. The chain crosses the membrane as a helical span at residues 150 to 166; the sequence is LIGQVFLCCSFVLACFG. The Extracellular portion of the chain corresponds to 167–196; the sequence is ALPHVMVTSYYEPSSCIEEDGVLTEQLRTK. A helical transmembrane segment spans residues 197 to 215; sequence LNTFHTWYSFAGPLFITVI. Residues 216 to 234 are Cytoplasmic-facing; it reads CYSMSCYKLFKTKLSKRAE. The helical transmembrane segment at 235 to 251 threads the bilayer; it reads VVTIITMTTLLFIVFCI. At 252-286 the chain is on the extracellular side; it reads PYYIMESIDTLLRVGVIEETCAKRSAIVYGIQCTY. The helical transmembrane segment at 287–303 threads the bilayer; that stretch reads MLLVLYYCMLPLMFAMF. Residues 304-321 are Cytoplasmic-facing; the sequence is GSLFRQRMAAWCKTICHC.

Belongs to the G-protein coupled receptor 1 family.

It is found in the host cell membrane. May be highly relevant to the process of cellular transformation and rapid T-cell proliferation effected by HVS during latent infections of T-cells in susceptible hosts. The polypeptide is G-protein coupled receptor homolog ECRF3 (74) (Saimiri sciureus (Common squirrel monkey)).